A 440-amino-acid chain; its full sequence is Long-chain alkane monooxygenase (440 aa).

FMN is bound by residues Asp58, 137–138, Tyr158, and 227–230; these read SH and AGMS.

This sequence belongs to the NtaA/SnaA/DszA monooxygenase family. Homodimer.

The protein resides in the secreted. It carries out the reaction a long-chain alkane + FMNH2 + O2 = a long chain fatty alcohol + FMN + H2O + H(+). Functionally, involved in the degradation of long-chain alkanes. Converts alkanes ranging from C(15) to C(36) into their corresponding primary alcohols. The chain is Long-chain alkane monooxygenase from Geobacillus thermodenitrificans (strain NG80-2).